A 128-amino-acid chain; its full sequence is MLHSSHRPYPRGARVAHLLREEIAAVLPRLHGMSSGLSPLPPSITMVDLPTDMRSATVYFSLMDGPDRADTIREVLQDHAGEIRQLLGRRLALRRIPPLHFVYDARFDRGAEMAELLAHLPPAPEDLP.

Belongs to the RbfA family. In terms of assembly, monomer. Binds 30S ribosomal subunits, but not 50S ribosomal subunits or 70S ribosomes.

It is found in the cytoplasm. In terms of biological role, one of several proteins that assist in the late maturation steps of the functional core of the 30S ribosomal subunit. Associates with free 30S ribosomal subunits (but not with 30S subunits that are part of 70S ribosomes or polysomes). Required for efficient processing of 16S rRNA. May interact with the 5'-terminal helix region of 16S rRNA. This chain is Ribosome-binding factor A, found in Acidithiobacillus ferrooxidans (strain ATCC 23270 / DSM 14882 / CIP 104768 / NCIMB 8455) (Ferrobacillus ferrooxidans (strain ATCC 23270)).